The sequence spans 122 residues: MNAVTESAATTEMPAPFVFTDAAADKVKQLIDEEGNPDLKLRVFVQGGGCSGFQYGFTFDEEVNEDDTVLNKNGVVLLVDAMSYQYLVGAEIDYKDDLNGAQFVIKNPNATTTCGCGSSFSV.

Iron-sulfur cluster is bound by residues C50, C114, and C116.

It belongs to the HesB/IscA family. As to quaternary structure, homodimer. Iron-sulfur cluster is required as a cofactor.

Required for insertion of 4Fe-4S clusters. This chain is Putative iron-sulfur cluster insertion protein ErpA, found in Burkholderia mallei (strain NCTC 10247).